We begin with the raw amino-acid sequence, 109 residues long: Nucleoid-associated protein Shal_1591 (109 aa).

The disordered stretch occupies residues 87-109; it reads NQKEKMAEVTGGMQLPPGMKMPF.

Belongs to the YbaB/EbfC family. In terms of assembly, homodimer.

Its subcellular location is the cytoplasm. It is found in the nucleoid. Its function is as follows. Binds to DNA and alters its conformation. May be involved in regulation of gene expression, nucleoid organization and DNA protection. The chain is Nucleoid-associated protein Shal_1591 from Shewanella halifaxensis (strain HAW-EB4).